A 161-amino-acid polypeptide reads, in one-letter code: MQPTNFHDQLKFAWLAGFVDADGCINAQIVSREDYLLKYQVRVSLTVFQSTTRHFILLDIQKILGCGTVRKRNDGMSEFCVVGGTSLQTTLEKLLPYLQLKRAQAKLVLQIIKKLPNTKDPSVLMEAALLADKVGLLTDGKKRTILAENVRECLKKLGHVV.

The protein belongs to the LAGLIDADG endonuclease family.

Its subcellular location is the plastid. The protein localises to the chloroplast. Probable endonuclease involved in intron homing. The protein is DNA endonuclease I-CvuI of Chlorella vulgaris (Green alga).